A 3414-amino-acid polypeptide reads, in one-letter code: Hemocyanin 1 (3414 aa).

Residues 1 to 16 (MLSVRLLIVVLALANA) form the signal peptide. Glu17 contacts a divalent metal cation. A functional unit a (wall) region spans residues 17 to 437 (ENLVRKSVEH…PPVKHHQSAN (421 aa)). His58 serves as a coordination point for Cu cation. A disulfide bridge connects residues Cys64 and Cys73. The segment at residues 74–76 (CIH) is a cross-link (2'-(S-cysteinyl)-histidine (Cys-His)). Cu cation is bound by residues His76, His85, His195, His199, and His226. A disulfide bridge links Cys185 with Cys252. Residues 287–290 (CELH) constitute a cross-link (2'-(S-cysteinyl)-histidine (Cys-His)). A disulfide bond links Cys339 and Cys351. N-linked (GlcNAc...) asparagine glycosylation is present at Asn403. The tract at residues 438–851 (LLVRKNINDL…RVKFDKVPRS (414 aa)) is functional unit b (wall). His478 is a binding site for Cu cation. Cysteines 484 and 495 form a disulfide. Residues 496-498 (CVH) constitute a cross-link (2'-(S-cysteinyl)-histidine (Cys-His)). Cu cation is bound by residues His498 and His507. N-linked (GlcNAc...) asparagine glycosylation occurs at Asn545. Cysteines 608 and 674 form a disulfide. Cu cation-binding residues include His618, His622, and His649. A WD 1 repeat occupies 628–669 (SEHFSMSSLHYTAFDPLFYFHHSNVDRLWAVWQALQMRRHKP). Glu737 provides a ligand contact to a divalent metal cation. The segment at 852-1271 (RLIRKNVDRL…EVYQAEVTSA (420 aa)) is functional unit c (wall). His892 is a Cu cation binding site. A disulfide bridge links Cys898 with Cys909. Positions 910–912 (CVH) form a cross-link, 2'-(S-cysteinyl)-histidine (Cys-His). Residues His912, His921, His1031, His1035, and His1062 each coordinate Cu cation. Intrachain disulfides connect Cys1021/Cys1088 and Cys1178/Cys1184. Residues 1041-1082 (AQPYGMASLRYTAFDPLFYLHHSNTDRIWAIWQALQKYRGKP) form a WD 2 repeat. The tract at residues 1272–1680 (NRIRKNIENL…AHTDDGHTEP (409 aa)) is functional unit d (wall). Position 1309 (His1309) interacts with Cu cation. Residues Cys1315 and Cys1324 are joined by a disulfide bond. Residues 1325 to 1327 (CVH) constitute a cross-link (2'-(S-cysteinyl)-histidine (Cys-His)). The Cu cation site is built by His1327, His1336, His1440, His1444, and His1471. Disulfide bonds link Cys1430–Cys1497 and Cys1585–Cys1595. The stretch at 1450–1491 (KGKYSMSNLDYAAFDPVFFLHHATTDRIWAIWQDLQRFRKRP) is one WD 3 repeat. An N-linked (GlcNAc...) asparagine glycan is attached at Asn1648. The segment at 1681 to 2097 (VMIRKDITQL…HDISSHHLSL (417 aa)) is functional unit e (wall). Cu cation is bound at residue His1721. A disulfide bridge connects residues Cys1727 and Cys1738. A cross-link (2'-(S-cysteinyl)-histidine (Cys-His)) is located at residues 1739-1741 (CVH). Residues His1741, His1750, His1863, His1867, and His1894 each coordinate Cu cation. Cystine bridges form between Cys1853-Cys1920 and Cys2009-Cys2015. One copy of the WD 4 repeat lies at 1873–1914 (KEPYGIGHLHYASYDPLFYIHHSQTDRIWAIWQSLQRFRGLS). The tract at residues 2098–2517 (NKVRHDLSTL…EDHHSSSMAG (420 aa)) is functional unit f (wall). Residue His2138 coordinates Cu cation. Cys2144 and Cys2154 are oxidised to a cystine. Asn2145 carries N-linked (GlcNAc...) asparagine glycosylation. Positions 2155–2157 (CIH) form a cross-link, 2'-(S-cysteinyl)-histidine (Cys-His). His2157, His2166, His2276, His2280, and His2307 together coordinate Cu cation. The stretch at 2163–2199 (PHWHRLYTLQFEQALRRHGSSVAVPYWDWTKPIHNIP) is one WD 5 repeat. Intrachain disulfides connect Cys2266–Cys2333 and Cys2420–Cys2426. Glu2424 is an a divalent metal cation binding site. The interval 2518-2921 (HGVRKEINTL…EKHHEDHHED (404 aa)) is functional unit g (internal arc). His2558 is a Cu cation binding site. A disulfide bond links Cys2564 and Cys2574. A glycan (N-linked (GlcNAc...) asparagine) is linked at Asn2571. Positions 2575-2577 (CTH) form a cross-link, 2'-(S-cysteinyl)-histidine (Cys-His). His2577, His2586, His2686, His2690, and His2717 together coordinate Cu cation. 2 disulfide bridges follow: Cys2676–Cys2743 and Cys2830–Cys2836. One copy of the WD 6 repeat lies at 2696-2737 (LTPYGMSTLEYTTYDPLFWLHHANTDRIWAIWQALQEYRGLP). The segment at 2922–3414 (ILVRKNIHSL…LRIHVHVDDE (493 aa)) is functional unit h (internal slab). His2962 is a Cu cation binding site. Cys2968 and Cys2978 are disulfide-bonded. A cross-link (2'-(S-cysteinyl)-histidine (Cys-His)) is located at residues 2979 to 2981 (CVH). Cu cation is bound by residues His2981, His2990, His3091, His3095, and His3122. A disulfide bond links Cys3081 and Cys3148. Residues 3101 to 3142 (AEKYSMSTLEYSAFDPYFMIHHASLDKIWIIWQELQKRRVKP) form a WD 7 repeat. Residue Asn3278 is glycosylated (N-linked (GlcNAc...) asparagine). Cys3367 and Cys3400 are joined by a disulfide.

Belongs to the tyrosinase family. Hemocyanin subfamily. As to quaternary structure, homo-didecamer, with two decamers assembled face-to-face at their open ends. This didecamer form a stable 25 nM cylinder wall. Post-translationally, probably N-glycosylated. Asn-1280 and Asn-2484 are buried deeply in the protein which make them inaccessible for sugar attachment. Asn-3278 N-glycan is likely to represent a diantennate carbohydrate tree. The didecamer is almost evenly tagged by a total of 120 sugar trees. In terms of tissue distribution, hemolymph.

The protein resides in the secreted. Its subcellular location is the extracellular space. Functionally, hemocyanins are copper-containing oxygen carriers occurring freely dissolved in the hemolymph of many mollusks and arthropods. This chain is Hemocyanin 1, found in Megathura crenulata (Giant keyhole limpet).